Here is a 358-residue protein sequence, read N- to C-terminus: uncharacterized protein (358 aa).

29-36 lines the ATP pocket; the sequence is GPINSGKT.

It belongs to the archaeal ATPase family.

This is an uncharacterized protein from Methanocaldococcus jannaschii (strain ATCC 43067 / DSM 2661 / JAL-1 / JCM 10045 / NBRC 100440) (Methanococcus jannaschii).